Here is a 240-residue protein sequence, read N- to C-terminus: Uridylate kinase (240 aa).

12–15 (KLSG) serves as a coordination point for ATP. The tract at residues 20-25 (GDKGFG) is involved in allosteric activation by GTP. Gly54 contacts UMP. Residues Gly55 and Arg59 each coordinate ATP. UMP-binding positions include Asp74 and 135 to 142 (TGSPYFST). ATP contacts are provided by Asn163, Tyr169, and Asp172.

This sequence belongs to the UMP kinase family. As to quaternary structure, homohexamer.

The protein localises to the cytoplasm. It carries out the reaction UMP + ATP = UDP + ADP. It functions in the pathway pyrimidine metabolism; CTP biosynthesis via de novo pathway; UDP from UMP (UMPK route): step 1/1. Its activity is regulated as follows. Allosterically activated by GTP. Inhibited by UTP. In terms of biological role, catalyzes the reversible phosphorylation of UMP to UDP. This chain is Uridylate kinase, found in Levilactobacillus brevis (strain ATCC 367 / BCRC 12310 / CIP 105137 / JCM 1170 / LMG 11437 / NCIMB 947 / NCTC 947) (Lactobacillus brevis).